We begin with the raw amino-acid sequence, 377 residues long: 3-(aryl)acrylate reductase (377 aa).

Residues 121 to 130 (FALTEPGAGS), 154 to 156 (FIT), Arg-266, Gln-277, and 334 to 338 (QIHGG) each bind FAD. Residue Glu-361 is the Proton acceptor of the active site. 363-365 (TSE) provides a ligand contact to FAD.

Belongs to the acyl-CoA dehydrogenase family. FAD serves as cofactor.

The catalysed reaction is 3-phenylpropanoate + oxidized [electron-transfer flavoprotein] + H(+) = (E)-cinnamate + reduced [electron-transfer flavoprotein]. It catalyses the reaction phloretate + oxidized [electron-transfer flavoprotein] + H(+) = (E)-4-coumarate + reduced [electron-transfer flavoprotein]. It carries out the reaction indole-3-propanoate + oxidized [electron-transfer flavoprotein] + H(+) = (E)-3-(indol-3-yl)acrylate + reduced [electron-transfer flavoprotein]. It participates in amino-acid degradation. Essential for the reductive metabolism of L-phenylalanine, L-tyrosine and L-tryptophan. Catalyzes the reduction of phenylacrylic acid to phenylpropionic acid, 4-hydroxy-phenylacrylic acid to 4-hydroxy-phenylpropionic acid, and indoleacrylic acid to indolepropionic acid. The chain is 3-(aryl)acrylate reductase from Clostridium sporogenes (strain ATCC 15579).